The following is a 163-amino-acid chain: NADH-quinone oxidoreductase subunit I (163 aa).

2 4Fe-4S ferredoxin-type domains span residues Leu53–Gly83 and Val94–Asn123. [4Fe-4S] cluster contacts are provided by Cys63, Cys66, Cys69, Cys73, Cys103, Cys106, Cys109, and Cys113.

The protein belongs to the complex I 23 kDa subunit family. As to quaternary structure, NDH-1 is composed of 14 different subunits. Subunits NuoA, H, J, K, L, M, N constitute the membrane sector of the complex. [4Fe-4S] cluster is required as a cofactor.

Its subcellular location is the cell inner membrane. The enzyme catalyses a quinone + NADH + 5 H(+)(in) = a quinol + NAD(+) + 4 H(+)(out). Functionally, NDH-1 shuttles electrons from NADH, via FMN and iron-sulfur (Fe-S) centers, to quinones in the respiratory chain. The immediate electron acceptor for the enzyme in this species is believed to be ubiquinone. Couples the redox reaction to proton translocation (for every two electrons transferred, four hydrogen ions are translocated across the cytoplasmic membrane), and thus conserves the redox energy in a proton gradient. The chain is NADH-quinone oxidoreductase subunit I from Allorhizobium ampelinum (strain ATCC BAA-846 / DSM 112012 / S4) (Agrobacterium vitis (strain S4)).